We begin with the raw amino-acid sequence, 184 residues long: Ribosome-recycling factor (184 aa).

It belongs to the RRF family.

The protein localises to the cytoplasm. Its function is as follows. Responsible for the release of ribosomes from messenger RNA at the termination of protein biosynthesis. May increase the efficiency of translation by recycling ribosomes from one round of translation to another. The chain is Ribosome-recycling factor from Stenotrophomonas maltophilia (strain R551-3).